A 291-amino-acid polypeptide reads, in one-letter code: Phosphate import ATP-binding protein PstB (291 aa).

Residues 1-21 (MANKQIIDKNDDLQAHTDRND) are disordered. In terms of domain architecture, ABC transporter spans 45–286 (YSTKNLDLWY…PSDKQTEDYI (242 aa)). ATP is bound at residue 77 to 84 (GPSGCGKS).

This sequence belongs to the ABC transporter superfamily. Phosphate importer (TC 3.A.1.7) family. As to quaternary structure, the complex is composed of two ATP-binding proteins (PstB), two transmembrane proteins (PstC and PstA) and a solute-binding protein (PstS).

The protein resides in the cell membrane. It carries out the reaction phosphate(out) + ATP + H2O = ADP + 2 phosphate(in) + H(+). In terms of biological role, part of the ABC transporter complex PstSACB involved in phosphate import. Responsible for energy coupling to the transport system. The chain is Phosphate import ATP-binding protein PstB from Staphylococcus saprophyticus subsp. saprophyticus (strain ATCC 15305 / DSM 20229 / NCIMB 8711 / NCTC 7292 / S-41).